The sequence spans 178 residues: Protein RICE FLOWERING LOCUS T 1 (178 aa).

Belongs to the phosphatidylethanolamine-binding protein family. In terms of assembly, interacts with FTIP1. Expressed in leaf vascular tissues. Specifically expressed in the phloem including companion cells.

Its subcellular location is the cytoplasm. The protein resides in the nucleus. It localises to the endoplasmic reticulum. Its function is as follows. Probable mobile flower-promoting signal (florigen) that moves from the leaf to the shoot apical meristem (SAM) and induces flowering. Promotes the transition from vegetative growth to flowering under long day (LD) conditions. Acts upstream of MADS14 and MADS15. May also participate in the promotion of flowering under short day (SD) conditions. This Oryza sativa subsp. japonica (Rice) protein is Protein RICE FLOWERING LOCUS T 1.